The following is a 115-amino-acid chain: Probable prefoldin subunit 1 (115 aa).

The protein belongs to the prefoldin subunit beta family. Heterohexamer of two PFD-alpha type and four PFD-beta type subunits.

Binds specifically to cytosolic chaperonin (c-CPN) and transfers target proteins to it. Binds to nascent polypeptide chain and promotes folding in an environment in which there are many competing pathways for nonnative proteins. This Dictyostelium discoideum (Social amoeba) protein is Probable prefoldin subunit 1 (pfdn1).